We begin with the raw amino-acid sequence, 425 residues long: Polyribonucleotide 5'-hydroxyl-kinase Clp1 (425 aa).

Residues Glu-22, Lys-62, and 124–129 each bind ATP; that span reads DVGKST.

The protein belongs to the Clp1 family. Clp1 subfamily. In terms of assembly, component of the tRNA splicing endonuclease complex, composed of CLP1, TSEN2, TSEN15, TSEN34 and TSEN54. Component of pre-mRNA cleavage complex II (CF-II). Also associates with numerous components of the pre-mRNA cleavage complex I (CF-I/CFIm), including NUDT21, CPSF2, CPSF3, CPSF6 and CPSF7. Interacts with CSTF2 and SYMPK. The cofactor is Mg(2+). Requires Mn(2+) as cofactor. It depends on Ni(2+) as a cofactor.

Its subcellular location is the nucleus. It carries out the reaction a 5'-end dephospho-2'-deoxyribonucleoside-DNA + ATP = a 5'-end 5'-phospho-2'-deoxyribonucleoside-DNA + ADP + H(+). The catalysed reaction is a 5'-end dephospho-ribonucleoside-RNA + ATP = a 5'-end 5'-phospho-ribonucleoside-RNA + ADP + H(+). Polynucleotide kinase that can phosphorylate the 5'-hydroxyl groups of double-stranded RNA (dsRNA), single-stranded RNA (ssRNA), double-stranded DNA (dsDNA) and double-stranded DNA:RNA hybrids. dsRNA is phosphorylated more efficiently than dsDNA, and the RNA component of a DNA:RNA hybrid is phosphorylated more efficiently than the DNA component. Plays a key role in both tRNA splicing and mRNA 3'-end formation. Component of the tRNA splicing endonuclease complex: phosphorylates the 5'-terminus of the tRNA 3'-exon during tRNA splicing; this phosphorylation event is a prerequisite for the subsequent ligation of the two exon halves and the production of a mature tRNA. Its role in tRNA splicing and maturation is required for cerebellar development. Component of the pre-mRNA cleavage complex II (CF-II), which seems to be required for mRNA 3'-end formation. Also phosphorylates the 5'-terminus of exogenously introduced short interfering RNAs (siRNAs), which is a necessary prerequisite for their incorporation into the RNA-induced silencing complex (RISC). However, endogenous siRNAs and microRNAs (miRNAs) that are produced by the cleavage of dsRNA precursors by DICER1 already contain a 5'-phosphate group, so this protein may be dispensible for normal RNA-mediated gene silencing. The polypeptide is Polyribonucleotide 5'-hydroxyl-kinase Clp1 (Bos taurus (Bovine)).